A 106-amino-acid chain; its full sequence is MSKDKSWLDFDHLAEDDLREALKPPSMYKVILMNDDYTPMEFVIDVLQKFFSYDVERATQLMLTVHYQGKAICGVFTAEVAETKVALVNKYARENDHPLLCTLEKA.

The protein belongs to the ClpS family. Binds to the N-terminal domain of the chaperone ClpA.

In terms of biological role, involved in the modulation of the specificity of the ClpAP-mediated ATP-dependent protein degradation. The chain is ATP-dependent Clp protease adapter protein ClpS from Cronobacter sakazakii (strain ATCC BAA-894) (Enterobacter sakazakii).